The following is a 467-amino-acid chain: Indoleacetamide hydrolase (467 aa).

Residues K74 and S149 each act as charge relay system in the active site. S173 (acyl-ester intermediate) is an active-site residue.

The protein belongs to the amidase family.

It functions in the pathway plant hormone metabolism; auxin biosynthesis. Its function is as follows. Hydrolyzes indole-3-acetamide (IAM) into indole-3-acetic acid (IAA). The chain is Indoleacetamide hydrolase (tms2) from Rhizobium radiobacter (Agrobacterium tumefaciens).